The primary structure comprises 313 residues: Homoserine O-succinyltransferase (313 aa).

Cysteine 142 functions as the Acyl-thioester intermediate in the catalytic mechanism. Substrate is bound by residues lysine 163 and serine 192. Catalysis depends on histidine 235, which acts as the Proton acceptor. Glutamate 237 is a catalytic residue. Arginine 249 is a substrate binding site.

It belongs to the MetA family.

It is found in the cytoplasm. It carries out the reaction L-homoserine + succinyl-CoA = O-succinyl-L-homoserine + CoA. It participates in amino-acid biosynthesis; L-methionine biosynthesis via de novo pathway; O-succinyl-L-homoserine from L-homoserine: step 1/1. Transfers a succinyl group from succinyl-CoA to L-homoserine, forming succinyl-L-homoserine. This Aliivibrio fischeri (strain MJ11) (Vibrio fischeri) protein is Homoserine O-succinyltransferase.